A 301-amino-acid chain; its full sequence is MNKPLPDVALTEISPALVSLDWVGMQGVEVPIRLAEASIRHPVHAHVDLQVDLADPSVKGIHMSRLYRLLDGYAERQIVSPDTLAALLEAMVESHLDCHSSHARLTLSFNLLCRRPALITEGLSGWKSYPVKLDATWHAGRLCLDSSVDITYSSTCPCSAALSRQLLEEAFAARFGRQSFVDPMQVATWLRENASFATPHSQRSVATVQVRVAEQAAELGLMTLIDLVEQALGTPVQTAVKRADEQAFARLNGQNLMYVEDAARKVQQALEGRYAASSVSVRHFESLHPHDAAAQTSNYLS.

The protein belongs to the GTP cyclohydrolase IV family.

It catalyses the reaction GTP + H2O = 7,8-dihydroneopterin 3'-triphosphate + formate + H(+). It functions in the pathway cofactor biosynthesis; 7,8-dihydroneopterin triphosphate biosynthesis; 7,8-dihydroneopterin triphosphate from GTP: step 1/1. Converts GTP to 7,8-dihydroneopterin triphosphate. In Pseudomonas syringae pv. syringae (strain B728a), this protein is GTP cyclohydrolase FolE2.